The sequence spans 130 residues: Small ribosomal subunit protein uS11 (130 aa).

It belongs to the universal ribosomal protein uS11 family. As to quaternary structure, part of the 30S ribosomal subunit. Interacts with proteins S7 and S18. Binds to IF-3.

Functionally, located on the platform of the 30S subunit, it bridges several disparate RNA helices of the 16S rRNA. Forms part of the Shine-Dalgarno cleft in the 70S ribosome. The protein is Small ribosomal subunit protein uS11 of Prochlorococcus marinus (strain MIT 9303).